The sequence spans 488 residues: N-succinylglutamate 5-semialdehyde dehydrogenase (488 aa).

221–226 (GSSRTG) provides a ligand contact to NAD(+). Active-site residues include E244 and C278.

Belongs to the aldehyde dehydrogenase family. AstD subfamily.

The enzyme catalyses N-succinyl-L-glutamate 5-semialdehyde + NAD(+) + H2O = N-succinyl-L-glutamate + NADH + 2 H(+). The protein operates within amino-acid degradation; L-arginine degradation via AST pathway; L-glutamate and succinate from L-arginine: step 4/5. Its function is as follows. Catalyzes the NAD-dependent reduction of succinylglutamate semialdehyde into succinylglutamate. In Pseudomonas fluorescens (strain SBW25), this protein is N-succinylglutamate 5-semialdehyde dehydrogenase.